The primary structure comprises 151 residues: 3-dehydroquinate dehydratase (151 aa).

The active-site Proton acceptor is the Y24. Residues N76, H82, and D89 each contribute to the substrate site. H102 acts as the Proton donor in catalysis. Residues 103–104 (LS) and R113 each bind substrate.

This sequence belongs to the type-II 3-dehydroquinase family. As to quaternary structure, homododecamer.

The enzyme catalyses 3-dehydroquinate = 3-dehydroshikimate + H2O. It participates in metabolic intermediate biosynthesis; chorismate biosynthesis; chorismate from D-erythrose 4-phosphate and phosphoenolpyruvate: step 3/7. In terms of biological role, catalyzes a trans-dehydration via an enolate intermediate. The polypeptide is 3-dehydroquinate dehydratase (Acinetobacter baumannii (strain ATCC 17978 / DSM 105126 / CIP 53.77 / LMG 1025 / NCDC KC755 / 5377)).